Consider the following 363-residue polypeptide: MLIDPRDSLLSSYDYELPEACIAQRPLEPRHAARLLMVEPEAGCRDRQVWDLLEELEPGDLLVVNDTRVLRARLQVRRAGGGLGELLVLQPQGQGQWLCLARPAKRLRPGDSIALVADGEPDLPLQVLAVEESSGGRLIQFPPECVDAASLEPLLLRYGVMPLPPYIHQQDESDNARYQTCFASKPGAVAAPTAGLHLSEELLAALTQKGIERASVTLHVGLGTFRPVETEDLSQLELHSEWVEVSEALVQAVAACRKRGGRVIAVGTTSVRSLEGVAALHGGVLQPFRGPVNLVIQPGFRFAVVQGLLTNFHLPKSSLLLLVSALIGRERLLQLYQHAITAGYRFYSYGDAMWIPPECSRQP.

Belongs to the QueA family. In terms of assembly, monomer.

The protein localises to the cytoplasm. The catalysed reaction is 7-aminomethyl-7-carbaguanosine(34) in tRNA + S-adenosyl-L-methionine = epoxyqueuosine(34) in tRNA + adenine + L-methionine + 2 H(+). It functions in the pathway tRNA modification; tRNA-queuosine biosynthesis. Its function is as follows. Transfers and isomerizes the ribose moiety from AdoMet to the 7-aminomethyl group of 7-deazaguanine (preQ1-tRNA) to give epoxyqueuosine (oQ-tRNA). This is S-adenosylmethionine:tRNA ribosyltransferase-isomerase from Synechococcus sp. (strain RCC307).